A 550-amino-acid chain; its full sequence is ATP synthase subunit alpha (550 aa).

172 to 179 (GDRKTGKT) contributes to the ATP binding site. Positions 521–550 (EPAAEPLAGEEDRETVTRFHDDATDRPAGS) are disordered. Residues 534–550 (ETVTRFHDDATDRPAGS) are compositionally biased toward basic and acidic residues.

Belongs to the ATPase alpha/beta chains family. F-type ATPases have 2 components, CF(1) - the catalytic core - and CF(0) - the membrane proton channel. CF(1) has five subunits: alpha(3), beta(3), gamma(1), delta(1), epsilon(1). CF(0) has three main subunits: a(1), b(2) and c(9-12). The alpha and beta chains form an alternating ring which encloses part of the gamma chain. CF(1) is attached to CF(0) by a central stalk formed by the gamma and epsilon chains, while a peripheral stalk is formed by the delta and b chains.

Its subcellular location is the cell membrane. The enzyme catalyses ATP + H2O + 4 H(+)(in) = ADP + phosphate + 5 H(+)(out). Functionally, produces ATP from ADP in the presence of a proton gradient across the membrane. The alpha chain is a regulatory subunit. This Salinispora tropica (strain ATCC BAA-916 / DSM 44818 / JCM 13857 / NBRC 105044 / CNB-440) protein is ATP synthase subunit alpha.